The primary structure comprises 355 residues: MRFSDNLAKILDKYENLGNTLSSGIMGDEFVKASKEYAELEDVVAKIKEYNKAKSELEEANNFKLEVGLDNATLEMIEDEIYTLENSLPKLERAVKIALLPKDDADSKSAIIEVRAGSGGEEAALFAAVLFNMYQRYAELKGWRFEILAISDTGIGGYKEASASIKGKDVFSKLKFESGVHRVQRVPETESQGRIHTSAATVAVLPEAEEVDIKIEDKDLRIDTYRASGAGGQHVNTTDSAVRITHIPTGITVALQDEKSQHKNKAKALKILRARIYEEERRKKEQERADSRRGQVGSGDRSERIRTYNFPQGRVSDHRINLTLYKIDEVVKNGQLDEFVEALIADDEAKKLLEI.

Position 233 is an N5-methylglutamine (Gln233). Positions 280-293 (ERRKKEQERADSRR) are enriched in basic and acidic residues. Positions 280–308 (ERRKKEQERADSRRGQVGSGDRSERIRTY) are disordered.

The protein belongs to the prokaryotic/mitochondrial release factor family. In terms of processing, methylated by PrmC. Methylation increases the termination efficiency of RF1.

Its subcellular location is the cytoplasm. In terms of biological role, peptide chain release factor 1 directs the termination of translation in response to the peptide chain termination codons UAG and UAA. This chain is Peptide chain release factor 1, found in Rickettsia peacockii (strain Rustic).